Consider the following 165-residue polypeptide: Putative pre-16S rRNA nuclease (165 aa).

Belongs to the YqgF nuclease family.

The protein localises to the cytoplasm. Its function is as follows. Could be a nuclease involved in processing of the 5'-end of pre-16S rRNA. In Sinorhizobium medicae (strain WSM419) (Ensifer medicae), this protein is Putative pre-16S rRNA nuclease.